The chain runs to 789 residues: LPS-assembly protein LptD (789 aa).

The signal sequence occupies residues 1 to 39 (MPPRQLSQTTPSCAVVPRKRRLVAALIAVPGLMPALAHA).

Belongs to the LptD family. In terms of assembly, component of the lipopolysaccharide transport and assembly complex. Interacts with LptE and LptA.

Its subcellular location is the cell outer membrane. Together with LptE, is involved in the assembly of lipopolysaccharide (LPS) at the surface of the outer membrane. This chain is LPS-assembly protein LptD, found in Paraburkholderia xenovorans (strain LB400).